The sequence spans 158 residues: NAD(P)H-quinone oxidoreductase subunit J, chloroplastic (158 aa).

It belongs to the complex I 30 kDa subunit family. As to quaternary structure, NDH is composed of at least 16 different subunits, 5 of which are encoded in the nucleus.

The protein localises to the plastid. Its subcellular location is the chloroplast thylakoid membrane. The enzyme catalyses a plastoquinone + NADH + (n+1) H(+)(in) = a plastoquinol + NAD(+) + n H(+)(out). The catalysed reaction is a plastoquinone + NADPH + (n+1) H(+)(in) = a plastoquinol + NADP(+) + n H(+)(out). In terms of biological role, NDH shuttles electrons from NAD(P)H:plastoquinone, via FMN and iron-sulfur (Fe-S) centers, to quinones in the photosynthetic chain and possibly in a chloroplast respiratory chain. The immediate electron acceptor for the enzyme in this species is believed to be plastoquinone. Couples the redox reaction to proton translocation, and thus conserves the redox energy in a proton gradient. The chain is NAD(P)H-quinone oxidoreductase subunit J, chloroplastic from Citrus sinensis (Sweet orange).